The sequence spans 95 residues: UPF0358 protein BT9727_3692 (95 aa).

Belongs to the UPF0358 family.

The chain is UPF0358 protein BT9727_3692 from Bacillus thuringiensis subsp. konkukian (strain 97-27).